The following is a 257-amino-acid chain: Putative aldolase class 2 protein CC_1201 (257 aa).

Zn(2+)-binding residues include His-114, His-116, and His-177.

It belongs to the aldolase class II family. It depends on Zn(2+) as a cofactor.

The polypeptide is Putative aldolase class 2 protein CC_1201 (Caulobacter vibrioides (strain ATCC 19089 / CIP 103742 / CB 15) (Caulobacter crescentus)).